The sequence spans 151 residues: Putative pre-16S rRNA nuclease (151 aa).

It belongs to the YqgF nuclease family.

The protein resides in the cytoplasm. Its function is as follows. Could be a nuclease involved in processing of the 5'-end of pre-16S rRNA. This is Putative pre-16S rRNA nuclease from Myxococcus xanthus (strain DK1622).